The primary structure comprises 338 residues: GTPase Obg (338 aa).

The Obg domain occupies 1-159; that stretch reads MSFIDEVKIN…RWIRMELKLM (159 aa). A disordered region spans residues 58-79; the sequence is DLRQHPHQKAGRGKNGMGSDRH. In terms of domain architecture, OBG-type G spans 160 to 331; sequence ADVGLLGMPS…LLDDIAFNLW (172 aa). Residues 166-173, 191-195, 213-216, 283-286, and 312-314 contribute to the GTP site; these read GMPSVGKS, FTTLK, DIPG, NKID, and SAA. Mg(2+) is bound by residues S173 and T193.

Belongs to the TRAFAC class OBG-HflX-like GTPase superfamily. OBG GTPase family. As to quaternary structure, monomer. It depends on Mg(2+) as a cofactor.

Its subcellular location is the cytoplasm. An essential GTPase which binds GTP, GDP and possibly (p)ppGpp with moderate affinity, with high nucleotide exchange rates and a fairly low GTP hydrolysis rate. Plays a role in control of the cell cycle, stress response, ribosome biogenesis and in those bacteria that undergo differentiation, in morphogenesis control. In Citrifermentans bemidjiense (strain ATCC BAA-1014 / DSM 16622 / JCM 12645 / Bem) (Geobacter bemidjiensis), this protein is GTPase Obg.